We begin with the raw amino-acid sequence, 711 residues long: Ferric/cupric reductase transmembrane component 2 (711 aa).

The first 23 residues, 1–23, serve as a signal peptide directing secretion; sequence MHWTSILSAILLFCLSGARASPA. Over 24–164 the chain is Extracellular; it reads KTVIRNKVPL…GFYANLDVGN (141 aa). N-linked (GlcNAc...) asparagine glycosylation is found at asparagine 85, asparagine 108, asparagine 120, and asparagine 134. The chain crosses the membrane as a helical span at residues 165-185; the sequence is IYGGIICAYFVAIMAFAGVLH. Residues 186-235 are Cytoplasmic-facing; it reads CMNYTPFKTVLLKQKLVGYVRGYLTLPTIGSKHASDFSYFRIFTGYLPTR. The helical transmembrane segment at 236 to 256 threads the bilayer; sequence LEGIIILGYLVLHTVFLAYGY. Over 257-280 the chain is Extracellular; sequence EYDPENIIFKSRRVQVARYVADRS. The Ferric oxidoreductase domain occupies 280 to 414; that stretch reads SGVLAFAHFP…SGIEWIYTAI (135 aa). The helical transmembrane segment at 281-301 threads the bilayer; it reads GVLAFAHFPLIVLFAGRNNFL. At 302–317 the chain is on the cytoplasmic side; it reads EYISGVKYTSFIMFHK. Heme is bound by residues histidine 316 and histidine 330. A helical membrane pass occupies residues 318 to 340; the sequence is WLGRMMFLDAMIHGSAYTSYTVA. The N-linked (GlcNAc...) asparagine glycan is linked to asparagine 341. Residues 341-353 are Extracellular-facing; that stretch reads NKTWATSKNRLYW. A helical membrane pass occupies residues 354–374; sequence QFGVAALCLAGTMVFFSFAVF. Residues 375-377 lie on the Cytoplasmic side of the membrane; the sequence is RKY. A helical membrane pass occupies residues 378 to 398; the sequence is FYEAFLFLHIVLGAMFFYACW. Heme is bound by residues histidine 386 and histidine 400. Over 399–400 the chain is Extracellular; it reads EH. Residues 401–423 form a helical membrane-spanning segment; that stretch reads VVSLSGIEWIYTAIAIWIVDRII. The FAD-binding FR-type domain occupies 415–534; that stretch reads AIWIVDRIIR…EGPYGSSSPV (120 aa). Residues 424–711 are Cytoplasmic-facing; that stretch reads RIIKASYFGF…IEYFEEYQCW (288 aa). 479–485 is an FAD binding site; that stretch reads HPFTVLD. NADP(+)-binding positions include 526 to 529 and 677 to 678; these read GPYG and CG.

This sequence belongs to the ferric reductase (FRE) family. Requires FAD as cofactor. The cofactor is heme.

The protein localises to the cell membrane. It catalyses the reaction 2 a Fe(II)-siderophore + NADP(+) + H(+) = 2 a Fe(III)-siderophore + NADPH. Functionally, metalloreductase responsible for reducing extracellular iron and copper prior to import. Catalyzes the reductive uptake of Fe(3+)-salts and Fe(3+) bound to catecholate or hydroxamate siderophores. Fe(3+) is reduced to Fe(2+), which then dissociates from the siderophore and can be imported by the high-affinity Fe(2+) transport complex in the plasma membrane. Also participates in Cu(2+) reduction and Cu(+) uptake. The chain is Ferric/cupric reductase transmembrane component 2 (FRE2) from Saccharomyces cerevisiae (strain ATCC 204508 / S288c) (Baker's yeast).